Consider the following 428-residue polypeptide: 3-phosphoshikimate 1-carboxyvinyltransferase (428 aa).

3 residues coordinate 3-phosphoshikimate: Lys22, Ser23, and Arg27. A phosphoenolpyruvate-binding site is contributed by Lys22. Residues Gly96 and Arg124 each coordinate phosphoenolpyruvate. 3-phosphoshikimate-binding residues include Ser170, Ser171, Gln172, Ser198, Asp314, Asn337, and Lys341. Gln172 provides a ligand contact to phosphoenolpyruvate. Asp314 serves as the catalytic Proton acceptor. Phosphoenolpyruvate-binding residues include Arg345, Arg387, and Lys412.

This sequence belongs to the EPSP synthase family. In terms of assembly, monomer.

It localises to the cytoplasm. It catalyses the reaction 3-phosphoshikimate + phosphoenolpyruvate = 5-O-(1-carboxyvinyl)-3-phosphoshikimate + phosphate. It participates in metabolic intermediate biosynthesis; chorismate biosynthesis; chorismate from D-erythrose 4-phosphate and phosphoenolpyruvate: step 6/7. In terms of biological role, catalyzes the transfer of the enolpyruvyl moiety of phosphoenolpyruvate (PEP) to the 5-hydroxyl of shikimate-3-phosphate (S3P) to produce enolpyruvyl shikimate-3-phosphate and inorganic phosphate. The protein is 3-phosphoshikimate 1-carboxyvinyltransferase of Shewanella denitrificans (strain OS217 / ATCC BAA-1090 / DSM 15013).